A 1118-amino-acid polypeptide reads, in one-letter code: Constitutive coactivator of PPAR-gamma-like protein 1 (1118 aa).

The tract at residues 339–405 (PPHYLAARPG…SLSEPAPLTL (67 aa)) is interaction with YES1, SRC and FYN. The tract at residues 374-533 (AKPVAPQVPS…GTVQPIPCLL (160 aa)) is disordered. A compositionally biased stretch (low complexity) spans 376–396 (PVAPQVPSPGGAPGQGPYPYS). Polar residues-rich tracts occupy residues 405-420 (LDTS…SYSN) and 435-447 (SPIN…SPNH). Basic and acidic residues predominate over residues 481–502 (GWEKTGSHSEPQARGDPGDQTK). Positions 503 to 514 (AEGSSTASSGSQ) are enriched in polar residues. Threonine 655 is subject to Phosphothreonine. Positions 829–1118 (ADQAAKVEKM…LEAAVLNKEE (290 aa)) are RNA binding. Arginine 873, arginine 884, and arginine 886 each carry omega-N-methylarginine. A disordered region spans residues 921–945 (AFSGSDSSRTSKSQGGVQPIPSQGG). Residues 924 to 936 (GSDSSRTSKSQGG) are compositionally biased toward polar residues. Lysine 932 is subject to N6-acetyllysine. Phosphoserine is present on serine 960. Residues arginine 982 and arginine 986 each carry the omega-N-methylarginine modification. Position 1023 is a phosphoserine (serine 1023). Residues 1025–1102 (EEVAKELKSK…HLNALSTDSA (78 aa)) form a disordered region. Positions 1026–1037 (EVAKELKSKSGE) are enriched in basic and acidic residues. A compositionally biased stretch (low complexity) spans 1038–1051 (SKSSAMSSDGSLAE). 3 positions are modified to phosphoserine: serine 1044, serine 1045, and serine 1048. Residues 1076–1101 (HSESALNNDSKTCNTNPHLNALSTDS) show a composition bias toward polar residues.

Belongs to the constitutive coactivator of PPAR-gamma family. Interacts with PURA. Interacts with SRC family protein kinases YES1, SRC and FYN. Upon tyrosine phosphorylation, interacts with PIK3R1. Interacts with IGF2BP1/IMP-1 in an RNA-dependent manner. In terms of processing, arg-982 is dimethylated, probably to asymmetric dimethylarginine. Post-translationally, phosphorylated on tyrosine by SRC family protein kinases upon oxidative stress, for instance following UV irradiation. Widely expressed. In gastric mucosa, detected in the bottom region of the foveolar epithelium (at protein level).

Its subcellular location is the cytoplasm. The protein resides in the cell membrane. Its function is as follows. Component of the oxidative stress-induced survival signaling. May regulate the activation of SRC family protein kinases. May act as a scaffolding protein enabling SRC family protein kinases to phosphorylate and activate PI3-kinase. Binds IGF2 RNA and promotes the production of IGF2 protein. This Homo sapiens (Human) protein is Constitutive coactivator of PPAR-gamma-like protein 1 (FAM120A).